Consider the following 345-residue polypeptide: uncharacterized protein (345 aa).

It belongs to the methyltransferase superfamily.

This is an uncharacterized protein from Streptomyces fradiae (Streptomyces roseoflavus).